The sequence spans 396 residues: Succinyl-CoA:mesaconate CoA-transferase (396 aa).

Residue Asp-175 is the Nucleophile of the active site.

The protein belongs to the CoA-transferase III family.

It carries out the reaction mesaconate + succinyl-CoA = 2-methylfumaryl-CoA + succinate. Involved in the methylaspartate cycle. Catalyzes the transfer of the CoA moiety from succinyl-CoA to mesaconate to generate mesaconyl-CoA (2-methylfumaryl-CoA) and succinate. In Haloarcula marismortui (strain ATCC 43049 / DSM 3752 / JCM 8966 / VKM B-1809) (Halobacterium marismortui), this protein is Succinyl-CoA:mesaconate CoA-transferase.